A 142-amino-acid polypeptide reads, in one-letter code: Large ribosomal subunit protein uL11 (142 aa).

Belongs to the universal ribosomal protein uL11 family. Part of the ribosomal stalk of the 50S ribosomal subunit. Interacts with L10 and the large rRNA to form the base of the stalk. L10 forms an elongated spine to which L12 dimers bind in a sequential fashion forming a multimeric L10(L12)X complex. One or more lysine residues are methylated.

Forms part of the ribosomal stalk which helps the ribosome interact with GTP-bound translation factors. The chain is Large ribosomal subunit protein uL11 from Mycoplasma mycoides subsp. mycoides SC (strain CCUG 32753 / NCTC 10114 / PG1).